A 149-amino-acid chain; its full sequence is MLEVKTISVEDTYEIRHRILRPHQSIEQCKYKEDHAEGSFHLGVFYDGTLISIASFSPQSQPLLTEASAYRLRGMATLEGYRDQKAGSTLIKHAEHKLAESGVQAVWCNARHHVKGYYAKLGWKELGEPFDIPGIGNHIVMYKTLRTSR.

Residues 2-146 (LEVKTISVED…NHIVMYKTLR (145 aa)) enclose the N-acetyltransferase domain.

Belongs to the acetyltransferase family.

This is an uncharacterized protein from Bacillus subtilis (strain 168).